The following is a 196-amino-acid chain: Peptidyl-tRNA hydrolase (196 aa).

Y17 is a tRNA binding site. H22 (proton acceptor) is an active-site residue. Residues F68, N70, and N116 each contribute to the tRNA site.

Belongs to the PTH family. Monomer.

The protein localises to the cytoplasm. It carries out the reaction an N-acyl-L-alpha-aminoacyl-tRNA + H2O = an N-acyl-L-amino acid + a tRNA + H(+). Its function is as follows. Hydrolyzes ribosome-free peptidyl-tRNAs (with 1 or more amino acids incorporated), which drop off the ribosome during protein synthesis, or as a result of ribosome stalling. Functionally, catalyzes the release of premature peptidyl moieties from peptidyl-tRNA molecules trapped in stalled 50S ribosomal subunits, and thus maintains levels of free tRNAs and 50S ribosomes. This chain is Peptidyl-tRNA hydrolase, found in Yersinia pestis bv. Antiqua (strain Antiqua).